Here is a 350-residue protein sequence, read N- to C-terminus: Probable dual-specificity RNA methyltransferase RlmN (350 aa).

The active-site Proton acceptor is the Glu-91. A Radical SAM core domain is found at 97–327 (YHHGNSVCIS…VTIRREMGRD (231 aa)). Residues Cys-104 and Cys-332 are joined by a disulfide bond. Residues Cys-111, Cys-115, and Cys-118 each coordinate [4Fe-4S] cluster. Residues 158–159 (GE), Ser-190, 213–215 (SLH), and Asn-289 contribute to the S-adenosyl-L-methionine site. Cys-332 serves as the catalytic S-methylcysteine intermediate.

The protein belongs to the radical SAM superfamily. RlmN family. The cofactor is [4Fe-4S] cluster.

The protein localises to the cytoplasm. The catalysed reaction is adenosine(2503) in 23S rRNA + 2 reduced [2Fe-2S]-[ferredoxin] + 2 S-adenosyl-L-methionine = 2-methyladenosine(2503) in 23S rRNA + 5'-deoxyadenosine + L-methionine + 2 oxidized [2Fe-2S]-[ferredoxin] + S-adenosyl-L-homocysteine. It carries out the reaction adenosine(37) in tRNA + 2 reduced [2Fe-2S]-[ferredoxin] + 2 S-adenosyl-L-methionine = 2-methyladenosine(37) in tRNA + 5'-deoxyadenosine + L-methionine + 2 oxidized [2Fe-2S]-[ferredoxin] + S-adenosyl-L-homocysteine. In terms of biological role, specifically methylates position 2 of adenine 2503 in 23S rRNA and position 2 of adenine 37 in tRNAs. The sequence is that of Probable dual-specificity RNA methyltransferase RlmN from Lachnospira eligens (strain ATCC 27750 / DSM 3376 / VPI C15-48 / C15-B4) (Eubacterium eligens).